We begin with the raw amino-acid sequence, 427 residues long: Glutamate-1-semialdehyde 2,1-aminomutase (427 aa).

An N6-(pyridoxal phosphate)lysine modification is found at Lys269.

It belongs to the class-III pyridoxal-phosphate-dependent aminotransferase family. HemL subfamily. As to quaternary structure, homodimer. Pyridoxal 5'-phosphate serves as cofactor.

The protein resides in the cytoplasm. It catalyses the reaction (S)-4-amino-5-oxopentanoate = 5-aminolevulinate. Its pathway is porphyrin-containing compound metabolism; protoporphyrin-IX biosynthesis; 5-aminolevulinate from L-glutamyl-tRNA(Glu): step 2/2. The chain is Glutamate-1-semialdehyde 2,1-aminomutase from Thermus thermophilus (strain ATCC BAA-163 / DSM 7039 / HB27).